Consider the following 592-residue polypeptide: 3-hydroxy-3-methylglutaryl-coenzyme A reductase 1 (592 aa).

The segment at 1–45 (MDLRRRPPKPPVTNNNNSNGSFRSYQPRTSDDDHRRRATTIAPPP) is disordered. Residues 12-28 (VTNNNNSNGSFRSYQPR) are compositionally biased toward polar residues. Residues asparagine 16 and asparagine 19 are each glycosylated (N-linked (GlcNAc...) asparagine). 2 consecutive transmembrane segments (helical) span residues 47-69 (ASDALPLPLYLTNAVFFTLFFSV) and 97-117 (AIIALIASFIYLLGFFGIDFV). Residues 118–171 (QSFISRASGDAWDLADTIDDDDHRLVTCSPPTPIVSVAKLPNPEPIVTESLPEE) are linker. The interval 172–592 (DEEIVKSVID…GATTTTTTTT (421 aa)) is catalytic. The active-site Charge relay system is glutamate 265. Asparagine 329 carries an N-linked (GlcNAc...) asparagine glycan. Residues lysine 397 and aspartate 473 each act as charge relay system in the active site. The Proton donor role is filled by histidine 571. Asparagine 575 carries an N-linked (GlcNAc...) asparagine glycan. The residue at position 577 (serine 577) is a Phosphoserine.

It belongs to the HMG-CoA reductase family. In terms of assembly, interacts (via N-terminus) with B''ALPHA and B''BETA. Inactivated by phosphorylation at Ser-577 by KIN10 activated form. Probably also phosphorylated at additional sites. In terms of tissue distribution, found in all tissues. Isoform Short is expressed at low levels specifically in flowers. Expressed in both the tapetum and microspores.

The protein resides in the endoplasmic reticulum membrane. The catalysed reaction is (R)-mevalonate + 2 NADP(+) + CoA = (3S)-3-hydroxy-3-methylglutaryl-CoA + 2 NADPH + 2 H(+). It participates in metabolic intermediate biosynthesis; (R)-mevalonate biosynthesis; (R)-mevalonate from acetyl-CoA: step 3/3. Regulated at the post-translational level in response to alterations of sphingolipid and sterol biosynthetic pathways. Negatively regulated by a PP2A-dependent dephosphorylation occurring at a site different than Ser-577. Completely inhibited by mevinolin (IC(50) = 12.5 nM). Reversibly inactivated by phosphorylation at Ser-577 by spinach or Brassica oleracea HMGR kinases in a cell-free system. Down-regulated by KIN10 through its phosphorylation at Ser-577. Functionally, catalyzes the synthesis of mevalonate, the specific precursor of all isoprenoid compounds present in plants. This chain is 3-hydroxy-3-methylglutaryl-coenzyme A reductase 1, found in Arabidopsis thaliana (Mouse-ear cress).